The following is a 431-amino-acid chain: Serine hydroxymethyltransferase (431 aa).

Residues leucine 128 and 132–134 (GHL) each bind (6S)-5,6,7,8-tetrahydrofolate. Lysine 237 carries the post-translational modification N6-(pyridoxal phosphate)lysine. Residue glutamate 253 participates in (6S)-5,6,7,8-tetrahydrofolate binding.

It belongs to the SHMT family. In terms of assembly, homodimer. The cofactor is pyridoxal 5'-phosphate.

The protein resides in the cytoplasm. It catalyses the reaction (6R)-5,10-methylene-5,6,7,8-tetrahydrofolate + glycine + H2O = (6S)-5,6,7,8-tetrahydrofolate + L-serine. Its pathway is one-carbon metabolism; tetrahydrofolate interconversion. The protein operates within amino-acid biosynthesis; glycine biosynthesis; glycine from L-serine: step 1/1. In terms of biological role, catalyzes the reversible interconversion of serine and glycine with tetrahydrofolate (THF) serving as the one-carbon carrier. This reaction serves as the major source of one-carbon groups required for the biosynthesis of purines, thymidylate, methionine, and other important biomolecules. Also exhibits THF-independent aldolase activity toward beta-hydroxyamino acids, producing glycine and aldehydes, via a retro-aldol mechanism. The chain is Serine hydroxymethyltransferase from Cereibacter sphaeroides (strain ATCC 17023 / DSM 158 / JCM 6121 / CCUG 31486 / LMG 2827 / NBRC 12203 / NCIMB 8253 / ATH 2.4.1.) (Rhodobacter sphaeroides).